Here is a 455-residue protein sequence, read N- to C-terminus: Keratin, type I cuticular Ha5 (455 aa).

The head stretch occupies residues 1–97; the sequence is MASKCLKASF…FGEGILTGNE (97 aa). An IF rod domain is found at 97–408; the sequence is EKETMQFLND…GLLDSEDCKL (312 aa). The segment at 98 to 132 is coil 1A; it reads KETMQFLNDRLASYLEKVRQLERENAELESRIRDW. The segment at 133–143 is linker 1; sequence CEQQVPYLCPD. The interval 144–244 is coil 1B; it reads YQSYFQTIEE…HEEEVNSLRC (101 aa). Positions 245-260 are linker 12; sequence QLGDRLNVEVDAAPPV. The coil 2 stretch occupies residues 261 to 404; that stretch reads DLNRVLNEMR…STYRGLLDSE (144 aa). The interval 405 to 455 is tail; it reads DCKLPCNPCAPDHSPSKSCLPCLPAASCGPGTAHTTCSPRPICVSCPGSRF.

The protein belongs to the intermediate filament family.

The protein is Keratin, type I cuticular Ha5 of Ovis aries (Sheep).